Consider the following 146-residue polypeptide: MNLSELRPAPGARKKPTRKGQGIGSGLGKTAGKGHKGQNARSGGGVRPGFEGGQMPLQRRFPKRGFTNIFKKQITAINLDELNVFEAGTEVTPELLLEAGLIKKVGDGVKILGDGILEKALTVKVHAFSKSAVEKITAAGGKAEVI.

The interval 1-58 (MNLSELRPAPGARKKPTRKGQGIGSGLGKTAGKGHKGQNARSGGGVRPGFEGGQMPLQ) is disordered. Composition is skewed to gly residues over residues 21–31 (QGIGSGLGKTA) and 42–52 (SGGGVRPGFEG).

It belongs to the universal ribosomal protein uL15 family. As to quaternary structure, part of the 50S ribosomal subunit.

Binds to the 23S rRNA. The sequence is that of Large ribosomal subunit protein uL15 from Desulforamulus reducens (strain ATCC BAA-1160 / DSM 100696 / MI-1) (Desulfotomaculum reducens).